Here is a 489-residue protein sequence, read N- to C-terminus: Protein MGF 505-2R (489 aa).

This sequence belongs to the asfivirus MGF 505 family.

Plays a role in virus cell tropism, and may be required for efficient virus replication in macrophages. The protein is Protein MGF 505-2R of Ornithodoros (relapsing fever ticks).